Consider the following 150-residue polypeptide: Large ribosomal subunit protein bL9 (150 aa).

This sequence belongs to the bacterial ribosomal protein bL9 family.

Binds to the 23S rRNA. The chain is Large ribosomal subunit protein bL9 from Idiomarina loihiensis (strain ATCC BAA-735 / DSM 15497 / L2-TR).